The chain runs to 145 residues: Large ribosomal subunit protein uL16 (145 aa).

A compositionally biased stretch (basic and acidic residues) spans 76–95; it reads PKTKTPAETRMGKGKGEPEH. The interval 76–97 is disordered; it reads PKTKTPAETRMGKGKGEPEHFV.

Belongs to the universal ribosomal protein uL16 family. As to quaternary structure, part of the 50S ribosomal subunit.

Its function is as follows. Binds 23S rRNA and is also seen to make contacts with the A and possibly P site tRNAs. This chain is Large ribosomal subunit protein uL16, found in Salinibacter ruber (strain DSM 13855 / M31).